The primary structure comprises 308 residues: Methionyl-tRNA formyltransferase (308 aa).

(6S)-5,6,7,8-tetrahydrofolate is bound at residue 107-110 (SLLP).

It belongs to the Fmt family.

It carries out the reaction L-methionyl-tRNA(fMet) + (6R)-10-formyltetrahydrofolate = N-formyl-L-methionyl-tRNA(fMet) + (6S)-5,6,7,8-tetrahydrofolate + H(+). Functionally, attaches a formyl group to the free amino group of methionyl-tRNA(fMet). The formyl group appears to play a dual role in the initiator identity of N-formylmethionyl-tRNA by promoting its recognition by IF2 and preventing the misappropriation of this tRNA by the elongation apparatus. This Carboxydothermus hydrogenoformans (strain ATCC BAA-161 / DSM 6008 / Z-2901) protein is Methionyl-tRNA formyltransferase.